The following is a 562-amino-acid chain: Formate--tetrahydrofolate ligase (562 aa).

ATP is bound at residue threonine 71–serine 78.

This sequence belongs to the formate--tetrahydrofolate ligase family.

The catalysed reaction is (6S)-5,6,7,8-tetrahydrofolate + formate + ATP = (6R)-10-formyltetrahydrofolate + ADP + phosphate. It functions in the pathway one-carbon metabolism; tetrahydrofolate interconversion. The chain is Formate--tetrahydrofolate ligase from Bacillus cereus (strain ATCC 10987 / NRS 248).